Here is a 279-residue protein sequence, read N- to C-terminus: Putative pyruvate, phosphate dikinase regulatory protein (279 aa).

An ADP-binding site is contributed by Gly-156–Thr-163.

Belongs to the pyruvate, phosphate/water dikinase regulatory protein family. PDRP subfamily.

The catalysed reaction is N(tele)-phospho-L-histidyl/L-threonyl-[pyruvate, phosphate dikinase] + ADP = N(tele)-phospho-L-histidyl/O-phospho-L-threonyl-[pyruvate, phosphate dikinase] + AMP + H(+). It carries out the reaction N(tele)-phospho-L-histidyl/O-phospho-L-threonyl-[pyruvate, phosphate dikinase] + phosphate + H(+) = N(tele)-phospho-L-histidyl/L-threonyl-[pyruvate, phosphate dikinase] + diphosphate. Functionally, bifunctional serine/threonine kinase and phosphorylase involved in the regulation of the pyruvate, phosphate dikinase (PPDK) by catalyzing its phosphorylation/dephosphorylation. The polypeptide is Putative pyruvate, phosphate dikinase regulatory protein (Chloroflexus aurantiacus (strain ATCC 29366 / DSM 635 / J-10-fl)).